A 235-amino-acid chain; its full sequence is tRNA (guanine-N(1)-)-methyltransferase (235 aa).

Residues Gly114 and 134 to 139 (IGDYIL) each bind S-adenosyl-L-methionine.

This sequence belongs to the RNA methyltransferase TrmD family. Homodimer.

It localises to the cytoplasm. It carries out the reaction guanosine(37) in tRNA + S-adenosyl-L-methionine = N(1)-methylguanosine(37) in tRNA + S-adenosyl-L-homocysteine + H(+). Its function is as follows. Specifically methylates guanosine-37 in various tRNAs. The polypeptide is tRNA (guanine-N(1)-)-methyltransferase (Ehrlichia ruminantium (strain Gardel)).